The chain runs to 148 residues: Protein SOB FIVE-LIKE 1 (148 aa).

A compositionally biased stretch (basic and acidic residues) spans 1 to 10 (MESPRNHGGS). Disordered stretches follow at residues 1-20 (MESP…SCES) and 33-148 (NDQS…SKTK). Positions 20 to 25 (SGWTMY) match the SOFL-A motif. Residues 54-76 (DGYENDDGDTSDDGGDEESDDSM) show a composition bias toward acidic residues. An SOFL-B motif is present at residues 75–84 (SMASDASSGP). Positions 91 to 101 (HINKHAARKNG) are enriched in basic residues. Basic and acidic residues predominate over residues 111-128 (QHTEKTISNEGEKSDLKA).

The protein belongs to the SOFL plant protein family. Predominantly expressed in the vascular tissues of seedlings, developing leaves, flowers and siliques, but barely detectable in roots and stems.

Its subcellular location is the cytoplasm. It localises to the nucleus. Its function is as follows. Involved in cytokinin-mediated development. Together with SOFL2, triggers the endogenous content of specific bioactive cytokinins derived from the biosynthetic intermediates trans-zeatin riboside monophosphate (tZRMP) and N(6)-(Delta(2)-isopentenyl)adenosine monophosphate (iPRMP) such as N-glucosides trans-zeatin 7-glucoside (tZ7G), cis-zeatin 7-glucoside (cZ7G) and N(6)-(Delta(2)-isopentenyl)adenine 7-glucoside (iP7G). In Arabidopsis thaliana (Mouse-ear cress), this protein is Protein SOB FIVE-LIKE 1.